The primary structure comprises 512 residues: Ascofuranone/ascochlorin biosynthesis clusters transcription regulator (512 aa).

Positions 14–49 (CDRCHSQKLRCPRSVEPEKANPEEPCSRCRKAGVPC) form a DNA-binding region, zn(2)-C6 fungal-type. Disordered regions lie at residues 54-87 (RGKV…PYDI), 118-148 (GSGS…DPLM), and 325-351 (GCTR…DGSI). The segment covering 56–70 (KVGRPSKATKKKSAR) has biased composition (basic residues). Composition is skewed to low complexity over residues 118-127 (GSGSVTTSAS) and 327-342 (TRSS…GSSM).

It localises to the nucleus. Functionally, transcription factor that regulates the expression of the asc-1 and asc-2 gene clusters that mediate the biosynthesis of both ascochlorin and ascofuranone, a strong inhibitor of cyanide-insensitive alternative oxidases and a promising drug candidate against African trypanosomiasis. Binds the 5'-CGGYGNNTTW-3' motif within promoters of the target genes. The protein is Ascofuranone/ascochlorin biosynthesis clusters transcription regulator of Acremonium egyptiacum (Oospora egyptiaca).